An 864-amino-acid chain; its full sequence is DNA double-strand break repair Rad50 ATPase (864 aa).

ATP contacts are provided by residues 32–38 (NGAGKSS) and glutamine 131. Coiled-coil stretches lie at residues 176–319 (RELD…EKAI) and 376–413 (DIDKVNSLEQKVEETRKKQLNLRAQLAKVESLISEKNE). Positions 380 to 478 (VNSLEQKVEE…ELNKIEREYR (99 aa)) constitute a Zinc-hook domain. The Zn(2+) site is built by cysteine 426 and cysteine 429. Residues 440–697 (KIIKEAKSYI…DREKIINAIN (258 aa)) adopt a coiled-coil conformation.

The protein belongs to the SMC family. RAD50 subfamily. As to quaternary structure, homodimer. Forms a heterotetramer composed of two Mre11 subunits and two Rad50 subunits. Zn(2+) serves as cofactor.

Functionally, part of the Rad50/Mre11 complex, which is involved in the early steps of DNA double-strand break (DSB) repair. The complex may facilitate opening of the processed DNA ends to aid in the recruitment of HerA and NurA. Rad50 controls the balance between DNA end bridging and DNA resection via ATP-dependent structural rearrangements of the Rad50/Mre11 complex. The protein is DNA double-strand break repair Rad50 ATPase of Saccharolobus solfataricus (strain ATCC 35092 / DSM 1617 / JCM 11322 / P2) (Sulfolobus solfataricus).